A 223-amino-acid chain; its full sequence is Ion-translocating oxidoreductase complex subunit E (223 aa).

The next 7 helical transmembrane spans lie at 17-37 (SLVQLLGLCPILAMTTNTINA), 38-58 (IGLGITTTFVLTITNSIISIL), 68-88 (IPIYMIIVSSTVTCIEMLLHA), 91-111 (FNLYQSLGVFIPLIVTNCIVV), 124-144 (VISFLDGMSIGLGSTFAMFVI), 156-176 (FLFGANKIFNVLDHSFFFTFI), and 181-201 (TIILAMLPSGGFLVLGFVIAF).

The protein belongs to the NqrDE/RnfAE family. As to quaternary structure, the complex is composed of six subunits: RnfA, RnfB, RnfC, RnfD, RnfE and RnfG.

It localises to the cell inner membrane. Its function is as follows. Part of a membrane-bound complex that couples electron transfer with translocation of ions across the membrane. In Buchnera aphidicola subsp. Schizaphis graminum (strain Sg), this protein is Ion-translocating oxidoreductase complex subunit E.